The chain runs to 606 residues: NADH-ubiquinone oxidoreductase chain 5 (606 aa).

Transmembrane regions (helical) follow at residues 3–23 (LFTSTLILSLSMLTIPVLMSL), 35–55 (YVKTIISYAFFTSLIPTLIFI), 87–107 (MIFTPVALFVTWSIMEFSMWY), 117–137 (FFKYLLMFLITMMILVTANNL), 140–160 (LFIGWEGVGIMSFLLIGWWYG), 171–191 (AILYNRIGDIGFILAMAWFLF), 211–233 (LPLLGLLLAATGKSAQFGLHPWL), 241–261 (TPVSALLHSSTMVVAGIFLLI), 273–293 (MQTLILCMGAITTLFTAICAL), 301–320 (IIAFSTSSQLGLMMVTIGIN), 325–347 (AFLHICTHAFFKAMLFMCSGSII), 366–386 (LPFTTTSLIVGSLALTGTPFL), 402–422 (SYTNAWALLMTLIATSLTAVY), 457–477 (LLIGSIFAGFIISLNITPMTI), 488–508 (LTALIITLTGFILALEISLMT), and 582–602 (GLIKLYFLSFLITLIITMLLF).

This sequence belongs to the complex I subunit 5 family. In terms of assembly, core subunit of respiratory chain NADH dehydrogenase (Complex I) which is composed of 45 different subunits.

It localises to the mitochondrion inner membrane. It carries out the reaction a ubiquinone + NADH + 5 H(+)(in) = a ubiquinol + NAD(+) + 4 H(+)(out). Its function is as follows. Core subunit of the mitochondrial membrane respiratory chain NADH dehydrogenase (Complex I) which catalyzes electron transfer from NADH through the respiratory chain, using ubiquinone as an electron acceptor. Essential for the catalytic activity and assembly of complex I. This chain is NADH-ubiquinone oxidoreductase chain 5 (MT-ND5), found in Pseudosoriculus fumidus (Taiwanese brown-toothed shrew).